A 140-amino-acid polypeptide reads, in one-letter code: uncharacterized protein (140 aa).

Positions 121 to 140 are disordered; that stretch reads EEVKNGELIDPNVTTEDEKL.

This is an uncharacterized protein from Schizosaccharomyces pombe (strain 972 / ATCC 24843) (Fission yeast).